The primary structure comprises 71 residues: Sec-independent protein translocase protein TatA (71 aa).

The chain crosses the membrane as a helical span at residues 1-21 (MGSFSMGHWLIVLAIIVLLFG). Over residues 41–57 (KEMEDETPVEKIEKADS) the composition is skewed to basic and acidic residues. The interval 41-71 (KEMEDETPVEKIEKADSETQSTKQNETTKNV) is disordered. Residues 58-71 (ETQSTKQNETTKNV) show a composition bias toward polar residues.

The protein belongs to the TatA/E family. The Tat system comprises two distinct complexes: a TatABC complex, containing multiple copies of TatA, TatB and TatC subunits, and a separate TatA complex, containing only TatA subunits. Substrates initially bind to the TatABC complex, which probably triggers association of the separate TatA complex to form the active translocon.

It is found in the cell inner membrane. Functionally, part of the twin-arginine translocation (Tat) system that transports large folded proteins containing a characteristic twin-arginine motif in their signal peptide across membranes. TatA could form the protein-conducting channel of the Tat system. In Campylobacter fetus subsp. fetus (strain 82-40), this protein is Sec-independent protein translocase protein TatA.